Reading from the N-terminus, the 295-residue chain is Bifunctional protein FolD (295 aa).

NADP(+) is bound by residues 166–168, Ser191, and Ile232; that span reads GRS.

The protein belongs to the tetrahydrofolate dehydrogenase/cyclohydrolase family. In terms of assembly, homodimer.

The enzyme catalyses (6R)-5,10-methylene-5,6,7,8-tetrahydrofolate + NADP(+) = (6R)-5,10-methenyltetrahydrofolate + NADPH. The catalysed reaction is (6R)-5,10-methenyltetrahydrofolate + H2O = (6R)-10-formyltetrahydrofolate + H(+). It participates in one-carbon metabolism; tetrahydrofolate interconversion. In terms of biological role, catalyzes the oxidation of 5,10-methylenetetrahydrofolate to 5,10-methenyltetrahydrofolate and then the hydrolysis of 5,10-methenyltetrahydrofolate to 10-formyltetrahydrofolate. This is Bifunctional protein FolD from Rhodopseudomonas palustris (strain HaA2).